A 383-amino-acid polypeptide reads, in one-letter code: 3-phytase (383 aa).

The signal sequence occupies residues 1–26 (MNHSKTLLLTAAAGLMLTCGAVSSQA). Positions 27–29 (KHK) are excised as a propeptide. In terms of domain architecture, BPP spans 30 to 362 (LSDPYHFTVN…VPWERIADQI (333 aa)).

It depends on Ca(2+) as a cofactor.

The protein resides in the secreted. It carries out the reaction 1D-myo-inositol hexakisphosphate + H2O = 1D-myo-inositol 1,2,4,5,6-pentakisphosphate + phosphate. Catalyzes the hydrolysis of inorganic orthophosphate from phytate. Only phytate, ADP, and ATP were hydrolyzed (100, 75, and 50% of the relative activity, respectively). This chain is 3-phytase (phyC), found in Bacillus subtilis.